Reading from the N-terminus, the 176-residue chain is Transcription termination/antitermination protein NusG (176 aa).

A KOW domain is found at G125–H149.

Belongs to the NusG family.

Functionally, participates in transcription elongation, termination and antitermination. This chain is Transcription termination/antitermination protein NusG, found in Helicobacter pylori (strain ATCC 700392 / 26695) (Campylobacter pylori).